We begin with the raw amino-acid sequence, 66 residues long: Sec-independent protein translocase protein TatA (66 aa).

The helical transmembrane segment at 1-21 (MIGGLGMPELIIILVIILIIF) threads the bilayer. The segment at 45-66 (RDAELNEGDKDDKEKEQEKLDK) is disordered.

The protein belongs to the TatA/E family. In terms of assembly, the Tat system comprises two distinct complexes: a TatABC complex, containing multiple copies of TatA, TatB and TatC subunits, and a separate TatA complex, containing only TatA subunits. Substrates initially bind to the TatABC complex, which probably triggers association of the separate TatA complex to form the active translocon.

It is found in the cell inner membrane. Functionally, part of the twin-arginine translocation (Tat) system that transports large folded proteins containing a characteristic twin-arginine motif in their signal peptide across membranes. TatA could form the protein-conducting channel of the Tat system. The protein is Sec-independent protein translocase protein TatA of Desulforapulum autotrophicum (strain ATCC 43914 / DSM 3382 / VKM B-1955 / HRM2) (Desulfobacterium autotrophicum).